The sequence spans 490 residues: ATP synthase subunit beta, chloroplastic (490 aa).

Glycine 170–threonine 177 is an ATP binding site.

It belongs to the ATPase alpha/beta chains family. F-type ATPases have 2 components, CF(1) - the catalytic core - and CF(0) - the membrane proton channel. CF(1) has five subunits: alpha(3), beta(3), gamma(1), delta(1), epsilon(1). CF(0) has four main subunits: a(1), b(1), b'(1) and c(9-12).

The protein localises to the plastid. The protein resides in the chloroplast thylakoid membrane. It catalyses the reaction ATP + H2O + 4 H(+)(in) = ADP + phosphate + 5 H(+)(out). In terms of biological role, produces ATP from ADP in the presence of a proton gradient across the membrane. The catalytic sites are hosted primarily by the beta subunits. The chain is ATP synthase subunit beta, chloroplastic from Cressa truxillensis (Spreading alkaliweed).